A 485-amino-acid chain; its full sequence is Tektin-5 (485 aa).

4 coiled-coil regions span residues 114 to 185, 225 to 247, 307 to 385, and 421 to 444; these read RLTD…EVNC, QEQM…DAQH, QNMR…MAKE, and TIDD…QLLV.

Belongs to the tektin family. As to quaternary structure, microtubule inner protein component of sperm flagellar doublet microtubules. Interacts with TEKT3. Ubiquitinated, leading to its degradation. Deubiquitinated by USP16, promoting its stability.

The protein localises to the cytoplasm. Its subcellular location is the cytoskeleton. The protein resides in the flagellum axoneme. Its function is as follows. Sperm-specific microtubule inner protein (MIP) part of the dynein-decorated doublet microtubules (DMTs) in flagellar axoneme. Forms an extensive interaction network in different conformations that reinforces the helix bundle composed by other tektin proteins (TEKT1 to TEKT4) and MIPs to anchor the tektin bundle onto the tubulin wall of A-tubule of the sperm flagellum. This Homo sapiens (Human) protein is Tektin-5 (TEKT5).